Consider the following 64-residue polypeptide: uncharacterized protein (64 aa).

The segment at 1-64 (MMITRGWEGW…LDPAISRSSS (64 aa)) is disordered. Residues 16–28 (RGAGTGTGLGGPG) show a composition bias toward gly residues.

This is an uncharacterized protein from Homo sapiens (Human).